We begin with the raw amino-acid sequence, 100 residues long: Enhancer of yellow 2 transcription factor (100 aa).

This sequence belongs to the ENY2 family. Component of the nuclear pore complex (NPC)-associated AMEX complex (anchoring and mRNA export complex), composed of at least e(y)2 and xmas-2. Component of the SAGA transcription coactivator-HAT complexes, at least composed of Ada2b, e(y)2, Pcaf/Gcn5, Taf10 and Nipped-A/Trrap. Within the SAGA complex, e(y)2, Sgf11, and not/nonstop form an additional subcomplex of SAGA called the DUB module (deubiquitination module). Component of the THO complex, composed of at least e(y)2, HPR1, THO2, THOC5, THOC6 and THOC7. Interacts with e(y)1. Interacts with su(Hw) (via zinc fingers). Interacts with xmas-2; required for localization to the nuclear periphery. Interacts with the nuclear pore complex (NPC).

It localises to the nucleus. The protein localises to the nucleoplasm. Its subcellular location is the cytoplasm. Its function is as follows. Involved in mRNA export coupled transcription activation by association with both the AMEX and the SAGA complexes. The SAGA complex is a multiprotein complex that activates transcription by remodeling chromatin and mediating histone acetylation and deubiquitination. Within the SAGA complex, participates in a subcomplex that specifically deubiquitinates histone H2B. The SAGA complex is recruited to specific gene promoters by activators, where it is required for transcription. Required for nuclear receptor-mediated transactivation. Involved in transcription elongation by recruiting the THO complex onto nascent mRNA. The AMEX complex functions in docking export-competent ribonucleoprotein particles (mRNPs) to the nuclear entrance of the nuclear pore complex (nuclear basket). AMEX participates in mRNA export and accurate chromatin positioning in the nucleus by tethering genes to the nuclear periphery. The sequence is that of Enhancer of yellow 2 transcription factor from Drosophila pseudoobscura pseudoobscura (Fruit fly).